A 450-amino-acid chain; its full sequence is Adenylosuccinate lyase (450 aa).

Residues 9–10 (RY), 75–77 (HHD), and 101–102 (TS) each bind N(6)-(1,2-dicarboxyethyl)-AMP. His-149 functions as the Proton donor/acceptor in the catalytic mechanism. Gln-223 contacts N(6)-(1,2-dicarboxyethyl)-AMP. The active-site Proton donor/acceptor is the Ser-273. N(6)-(1,2-dicarboxyethyl)-AMP contacts are provided by residues Ser-274, 279–281 (KRN), and 318–322 (SVERV).

The protein belongs to the lyase 1 family. Adenylosuccinate lyase subfamily. In terms of assembly, homotetramer. Residues from neighboring subunits contribute catalytic and substrate-binding residues to each active site.

It catalyses the reaction N(6)-(1,2-dicarboxyethyl)-AMP = fumarate + AMP. The catalysed reaction is (2S)-2-[5-amino-1-(5-phospho-beta-D-ribosyl)imidazole-4-carboxamido]succinate = 5-amino-1-(5-phospho-beta-D-ribosyl)imidazole-4-carboxamide + fumarate. It functions in the pathway purine metabolism; AMP biosynthesis via de novo pathway; AMP from IMP: step 2/2. Its pathway is purine metabolism; IMP biosynthesis via de novo pathway; 5-amino-1-(5-phospho-D-ribosyl)imidazole-4-carboxamide from 5-amino-1-(5-phospho-D-ribosyl)imidazole-4-carboxylate: step 2/2. In terms of biological role, catalyzes two reactions in de novo purine nucleotide biosynthesis. Catalyzes the breakdown of 5-aminoimidazole- (N-succinylocarboxamide) ribotide (SAICAR or 2-[5-amino-1-(5-phospho-beta-D-ribosyl)imidazole-4-carboxamido]succinate) to 5-aminoimidazole-4-carboxamide ribotide (AICAR or 5-amino-1-(5-phospho-beta-D-ribosyl)imidazole-4-carboxamide) and fumarate, and of adenylosuccinate (ADS or N(6)-(1,2-dicarboxyethyl)-AMP) to adenosine monophosphate (AMP) and fumarate. The polypeptide is Adenylosuccinate lyase (purB) (Pyrococcus abyssi (strain GE5 / Orsay)).